Reading from the N-terminus, the 199-residue chain is Holliday junction branch migration complex subunit RuvA (199 aa).

The domain I stretch occupies residues 1–64; sequence MIALLTGKLA…EDAINLYGFR (64 aa). The interval 65 to 143 is domain II; it reads TQQEKELFQL…KLGLAQPQAG (79 aa). The segment at 144–148 is flexible linker; it reads GATAP. The tract at residues 149–199 is domain III; sequence AKQEIRDDVLSALINLGYKEAVVQKALAELKVTEDATVELVLKQALKILMK.

This sequence belongs to the RuvA family. In terms of assembly, homotetramer. Forms an RuvA(8)-RuvB(12)-Holliday junction (HJ) complex. HJ DNA is sandwiched between 2 RuvA tetramers; dsDNA enters through RuvA and exits via RuvB. An RuvB hexamer assembles on each DNA strand where it exits the tetramer. Each RuvB hexamer is contacted by two RuvA subunits (via domain III) on 2 adjacent RuvB subunits; this complex drives branch migration. In the full resolvosome a probable DNA-RuvA(4)-RuvB(12)-RuvC(2) complex forms which resolves the HJ.

The protein resides in the cytoplasm. Its function is as follows. The RuvA-RuvB-RuvC complex processes Holliday junction (HJ) DNA during genetic recombination and DNA repair, while the RuvA-RuvB complex plays an important role in the rescue of blocked DNA replication forks via replication fork reversal (RFR). RuvA specifically binds to HJ cruciform DNA, conferring on it an open structure. The RuvB hexamer acts as an ATP-dependent pump, pulling dsDNA into and through the RuvAB complex. HJ branch migration allows RuvC to scan DNA until it finds its consensus sequence, where it cleaves and resolves the cruciform DNA. The polypeptide is Holliday junction branch migration complex subunit RuvA (Geobacter sp. (strain M21)).